Reading from the N-terminus, the 382-residue chain is Bifunctional enzyme IspD/IspF (382 aa).

The 2-C-methyl-D-erythritol 4-phosphate cytidylyltransferase stretch occupies residues 1–225 (MTFSVVIVAA…EHLAGVARVT (225 aa)). The tract at residues 226–382 (RVGQGFDAHR…SAVVAVETPA (157 aa)) is 2-C-methyl-D-erythritol 2,4-cyclodiphosphate synthase. Residues Asp-232 and His-234 each contribute to the a divalent metal cation site. 4-CDP-2-C-methyl-D-erythritol 2-phosphate is bound by residues 232-234 (DAH) and 258-259 (HS). His-266 serves as a coordination point for a divalent metal cation. 4-CDP-2-C-methyl-D-erythritol 2-phosphate-binding positions include 280–282 (DIG), 356–359 (TTTE), Phe-363, and Arg-366.

The protein in the N-terminal section; belongs to the IspD/TarI cytidylyltransferase family. IspD subfamily. It in the C-terminal section; belongs to the IspF family. A divalent metal cation serves as cofactor.

The catalysed reaction is 2-C-methyl-D-erythritol 4-phosphate + CTP + H(+) = 4-CDP-2-C-methyl-D-erythritol + diphosphate. The enzyme catalyses 4-CDP-2-C-methyl-D-erythritol 2-phosphate = 2-C-methyl-D-erythritol 2,4-cyclic diphosphate + CMP. Its pathway is isoprenoid biosynthesis; isopentenyl diphosphate biosynthesis via DXP pathway; isopentenyl diphosphate from 1-deoxy-D-xylulose 5-phosphate: step 2/6. The protein operates within isoprenoid biosynthesis; isopentenyl diphosphate biosynthesis via DXP pathway; isopentenyl diphosphate from 1-deoxy-D-xylulose 5-phosphate: step 4/6. Bifunctional enzyme that catalyzes the formation of 4-diphosphocytidyl-2-C-methyl-D-erythritol from CTP and 2-C-methyl-D-erythritol 4-phosphate (MEP) (IspD), and catalyzes the conversion of 4-diphosphocytidyl-2-C-methyl-D-erythritol 2-phosphate (CDP-ME2P) to 2-C-methyl-D-erythritol 2,4-cyclodiphosphate (ME-CPP) with a corresponding release of cytidine 5-monophosphate (CMP) (IspF). The chain is Bifunctional enzyme IspD/IspF from Caulobacter vibrioides (strain ATCC 19089 / CIP 103742 / CB 15) (Caulobacter crescentus).